A 289-amino-acid chain; its full sequence is 2-dehydro-3-deoxyphosphooctonate aldolase (289 aa).

It belongs to the KdsA family.

It localises to the cytoplasm. The catalysed reaction is D-arabinose 5-phosphate + phosphoenolpyruvate + H2O = 3-deoxy-alpha-D-manno-2-octulosonate-8-phosphate + phosphate. It functions in the pathway carbohydrate biosynthesis; 3-deoxy-D-manno-octulosonate biosynthesis; 3-deoxy-D-manno-octulosonate from D-ribulose 5-phosphate: step 2/3. Its pathway is bacterial outer membrane biogenesis; lipopolysaccharide biosynthesis. The sequence is that of 2-dehydro-3-deoxyphosphooctonate aldolase from Cupriavidus taiwanensis (strain DSM 17343 / BCRC 17206 / CCUG 44338 / CIP 107171 / LMG 19424 / R1) (Ralstonia taiwanensis (strain LMG 19424)).